Reading from the N-terminus, the 128-residue chain is Ribonuclease P protein component 4 (128 aa).

Cys-67, Cys-70, Cys-96, and Cys-99 together coordinate Zn(2+).

This sequence belongs to the eukaryotic/archaeal RNase P protein component 4 family. As to quaternary structure, consists of a catalytic RNA component and at least 4-5 protein subunits. The cofactor is Zn(2+).

It is found in the cytoplasm. The enzyme catalyses Endonucleolytic cleavage of RNA, removing 5'-extranucleotides from tRNA precursor.. Its function is as follows. Part of ribonuclease P, a protein complex that generates mature tRNA molecules by cleaving their 5'-ends. In Methanopyrus kandleri (strain AV19 / DSM 6324 / JCM 9639 / NBRC 100938), this protein is Ribonuclease P protein component 4.